Consider the following 183-residue polypeptide: Adenine phosphoribosyltransferase (183 aa).

The protein belongs to the purine/pyrimidine phosphoribosyltransferase family. As to quaternary structure, homodimer.

Its subcellular location is the cytoplasm. The catalysed reaction is AMP + diphosphate = 5-phospho-alpha-D-ribose 1-diphosphate + adenine. It participates in purine metabolism; AMP biosynthesis via salvage pathway; AMP from adenine: step 1/1. Functionally, catalyzes a salvage reaction resulting in the formation of AMP, that is energically less costly than de novo synthesis. The chain is Adenine phosphoribosyltransferase from Salmonella heidelberg (strain SL476).